Consider the following 356-residue polypeptide: MSLWVDKYRPSSLARLDYHKEQAAQLRNLVQCGDFPHLLVYGPSGAGKKTRIMCILRELYGIGVEKLRIEHQTITTPSKKKIEISTIASNYHLEVNPSDAGNSDRVVIQEMLKTVAQSQQLETSSQRDFKVVLLTEVDKLTKDAQHALRRTMEKYMSTCRLILCCNSTSKVIPPIRSRCLAVRVPAPSIEDICSVLSTVCRKEGLALPSTLARRLAEKSCRNLRKALLMCEACRVQQYPFTEDQEIPETDWEVYLRETANAIVSQQTPQRLLEVRGRLYELLTHCIPPEIIMKGLLSELLHNCDGQLKGEVAQMAAYYEHRLQLGSKAIYHLEAFVAKFMALYKKFMEDGLEGMMF.

The residue at position 20 (Lys20) is an N6-acetyllysine. At Ser125 the chain carries Phosphoserine.

The protein belongs to the activator 1 small subunits family. As to quaternary structure, subunit of the RFC complex, an heteropentameric complex consisting of a large subunit RFC1 and four small subunits RFC2, RFC3, RFC4 and RFC5; the RFC complex interacts with PCNA. Forms an heterotetrameric complex with RFC2, RFC4 and RFC5; this complex has ATPase activity but is not stimulated by PCNA. The heterotetramer of subunits RFC2, RFC3, RFC4 and RFC5 interacts with RAD17. Interacts with CNTD1; this interaction facilitates crossover formation.

It is found in the nucleus. Subunit of the replication factor C (RFC) complex which acts during elongation of primed DNA templates by DNA polymerases delta and epsilon, and is necessary for ATP-dependent loading of proliferating cell nuclear antigen (PCNA) onto primed DNA. This is Replication factor C subunit 3 (Rfc3) from Mus musculus (Mouse).